The sequence spans 695 residues: DSC E3 ubiquitin ligase complex subunit 1 (695 aa).

Residues 1–25 form the signal peptide; it reads MDRRRWVPSTPVVTLLLLFMLFAPA. Topologically, residues 26–319 are lumenal; that stretch reads PRLPSRNGES…KGPRNFVLEN (294 aa). Residues 320-340 form a helical membrane-spanning segment; it reads HLVRFSSLYIFIVLSQIFVLL. At 341–353 the chain is on the cytoplasmic side; the sequence is RQMRINSPSHVQR. Residues 354-374 form a helical membrane-spanning segment; sequence LSFLTIAMQAGLDAYIAIFFL. Residues 375–382 are Lumenal-facing; that stretch reads STNAVIEK. The chain crosses the membrane as a helical span at residues 383–403; the sequence is GYLPFVSVAFLSLVPSVMFTM. Residues 404–486 lie on the Cytoplasmic side of the membrane; it reads RYLALILRVQ…QRDWSAVCLR (83 aa). Residues 419 to 473 are disordered; it reads PPAPRPVTNNSSNNNTNQSNASNENSPNAPSAANDNTETTTVNPPQEDDQPMTQH. The segment covering 427–454 has biased composition (low complexity); sequence NNSSNNNTNQSNASNENSPNAPSAANDN. A helical transmembrane segment spans residues 487-507; sequence FYFIILVVCIASLYSAFWPVI. Residues 508-509 are Lumenal-facing; it reads YR. A helical membrane pass occupies residues 510–530; the sequence is FYFISALIFTSYSFWIPQIIQ. Over 531-540 the chain is Cytoplasmic; sequence NVKQGTSRSF. A helical transmembrane segment spans residues 541–561; that stretch reads TWTYILGASVLRLYLPLAIFI. The Lumenal segment spans residues 562 to 572; sequence DSELILGFPPK. Residues 573–593 form a helical membrane-spanning segment; it reads YFFALGLVLWMLFQVLVLLVQ. Residues 594 to 695 lie on the Cytoplasmic side of the membrane; the sequence is DTLGPRFFLP…PVCRCHLPAV (102 aa). The RING-type; atypical zinc finger occupies 634–689; sequence CPICMQPIELVSTGSTLNPASMMVRRNYMLTPCHHLYHRQCLLQWMETRSICPVCR.

As to quaternary structure, component of the DSC E3 ubiquitin ligase complex composed of dsc1, dsc2, dsc3 and dsc4.

The protein localises to the endoplasmic reticulum membrane. Its subcellular location is the golgi apparatus membrane. The enzyme catalyses S-ubiquitinyl-[E2 ubiquitin-conjugating enzyme]-L-cysteine + [acceptor protein]-L-lysine = [E2 ubiquitin-conjugating enzyme]-L-cysteine + N(6)-ubiquitinyl-[acceptor protein]-L-lysine.. Its pathway is protein modification; protein ubiquitination. In terms of biological role, catalytic component of the DSC E3 ubiquitin ligase complex which is required for the sre1 transcriptional activator proteolytic cleavage to release the soluble transcription factor from the membrane in low oxygen or sterol conditions. The complex also plays an important role in the multivesicular body (MVB) pathway and functions in a post-endoplasmic reticulum pathway for protein degradation. This is DSC E3 ubiquitin ligase complex subunit 1 (dsc1) from Schizosaccharomyces pombe (strain 972 / ATCC 24843) (Fission yeast).